The following is an 814-amino-acid chain: Plakophilin-2 (814 aa).

Residues 1-329 (MAIPGSLGEC…MTLERAVNML (329 aa)) form a required for binding to single-stranded DNA region. Ser44 is subject to Phosphoserine. An Omega-N-methylarginine modification is found at Arg46. 2 positions are modified to phosphoserine: Ser82 and Ser130. 8 ARM repeats span residues 200–240 (TCQH…SIKG), 309–352 (CDCL…ESFQ), 354–393 (SEAR…NLVF), 503–549 (PDGR…NLSY), 604–644 (PRGI…NLTA), 652–691 (SVAR…NLSR), 696–737 (QNEI…NLMQ), and 740–782 (YQNA…SLWA).

Belongs to the beta-catenin family. Interacts with DSC2. Interacts with JUP. Interacts with KRT5/CK5, KRT8/CK8, KRT14/CK14, KRT18/CK18 and VIM. Interacts (via N-terminus) with MARK3/C-TAK1. Interacts with DSP. Interacts with DSG1, DSG2 and DSG3. Interacts (via N-terminus) with CTNNB1. Interacts with CDH1. Interacts with the RNA polymerase III (Pol III) complex proteins POLR3A/RPC155, POLR3F/RPC39 and POLR3C/RPC82. Interacts with CTNNA3. Interacts (via N-terminus) with SCN5A/Nav1.5. Interacts with ANK3/ANKG and GJA1/CX43. In terms of tissue distribution, expressed in the heart (at protein level).

The protein resides in the nucleus. Its subcellular location is the cell junction. It is found in the desmosome. The protein localises to the cytoplasm. Its function is as follows. A component of desmosome cell-cell junctions which are required for positive regulation of cellular adhesion. Regulates focal adhesion turnover resulting in changes in focal adhesion size, cell adhesion and cell spreading, potentially via transcriptional modulation of beta-integrins. Required to maintain gingival epithelial barrier function. Important component of the desmosome that is also required for localization of desmosome component proteins such as DSC2, DSG2 and JUP to the desmosome cell-cell junction. Required for the formation of desmosome cell junctions in cardiomyocytes, thereby required for the correct formation of the heart, specifically trabeculation and formation of the atria walls. Loss of desmosome cell junctions leads to mis-localization of DSP and DSG2 resulting in disruption of cell-cell adhesion and disordered intermediate filaments. Modulates profibrotic gene expression in cardiomyocytes via regulation of DSP expression and subsequent activation of downstream TGFB1 and MAPK14/p38 MAPK signaling. Required for cardiac sodium current propagation and electrical synchrony in cardiac myocytes, via ANK3 stabilization and modulation of SCN5A/Nav1.5 localization to cell-cell junctions. Required for mitochondrial function, nuclear envelope integrity and positive regulation of SIRT3 transcription via maintaining DES localization at its nuclear envelope and cell tip anchoring points, and thereby preserving regulation of the transcriptional program. Maintenance of nuclear envelope integrity protects against DNA damage and transcriptional dysregulation of genes, especially those involved in the electron transport chain, thereby preserving mitochondrial function and protecting against superoxide radical anion generation. Binds single-stranded DNA (ssDNA). May regulate the localization of GJA1 to gap junctions in intercalated disks of the heart. The chain is Plakophilin-2 from Rattus norvegicus (Rat).